A 222-amino-acid chain; its full sequence is Pectate lyase A (222 aa).

Residues 1–26 form the signal peptide; sequence MKKMLTLLLSAGLVASIFGVMPAAAA.

Belongs to the polysaccharide lyase 3 family. The cofactor is Ca(2+).

Its subcellular location is the secreted. It catalyses the reaction Eliminative cleavage of (1-&gt;4)-alpha-D-galacturonan to give oligosaccharides with 4-deoxy-alpha-D-galact-4-enuronosyl groups at their non-reducing ends.. It carries out the reaction Eliminative cleavage of (1-&gt;4)-alpha-D-galacturonan methyl ester to give oligosaccharides with 4-deoxy-6-O-methyl-alpha-D-galact-4-enuronosyl groups at their non-reducing ends.. Its pathway is glycan metabolism; pectin degradation. In terms of biological role, catalyzes the depolymerization of both polygalacturonate and pectins with low (20-34%) and high (90%) levels of methyl esterification, with an endo mode of action. In contrast to the majority of pectate lyases, displays high activity on highly methylated pectins. Does not show xylanase and cellulase activity. This is Pectate lyase A from Paenibacillus amylolyticus.